We begin with the raw amino-acid sequence, 392 residues long: MASLRRGFGSDQTTASDTKMHYRQLAPTASVRVSPLCLGAMNFGEAHKARYGECSKETAFSIMDYFYSQGGNFIDTANGYQAGESEQWVGEWMKSRDNRDEIVLATKYSTGYMNHEKDKIQINYGGNSAKSMKVSVAASLKKLQTNYIDILYIHWWDYSTSIPELMHSLNDLVVSGQVLYLGVSDTPAWVVSKANQYARDHGLRQFVIYQGMWNAAMRDFERDIIPMCRDEGMGLAPYGTLGQGSFQTEEGRKQREKDNPGRKFGAKSLPYVEVSKVLEKLANAKGKAITDVALAYVLQKTPYVFPIVGGRKLEHIQGNVAALQVALSEAEVEEIEAAYPFDAGFPHTFLSGTLFDGAKPTAAQGPGDVFLTKWQGDIDWVEAPKAIRPSGQ.

Asp-75 contacts NADP(+). The Proton donor role is filled by Tyr-80. NADP(+) is bound by residues 184 to 185, Gln-210, 239 to 249, and 311 to 319; these read SD, GTLGQGSFQTE, and RKLEHIQGN. A disordered region spans residues 242–263; it reads GQGSFQTEEGRKQREKDNPGRK. Residues 249–261 are compositionally biased toward basic and acidic residues; sequence EEGRKQREKDNPG.

Belongs to the aldo/keto reductase family. Aldo/keto reductase 2 subfamily.

It participates in mycotoxin biosynthesis. Norsolorinic acid reductase; part of the fragmented gene cluster that mediates the biosynthesis of dothistromin (DOTH), a polyketide toxin very similar in structure to the aflatoxin precursor, versicolorin B. The first step of the pathway is the conversion of acetate to norsolorinic acid (NOR) and requires the fatty acid synthase subunits hexA and hexB, as well as the polyketide synthase pksA. PksA combines a hexanoyl starter unit and 7 malonyl-CoA extender units to synthesize the precursor NOR. The hexanoyl starter unit is provided to the acyl-carrier protein (ACP) domain by the fungal fatty acid synthase hexA/hexB. The second step is the conversion of NOR to averantin (AVN) and requires the norsolorinic acid ketoreductase nor1, which catalyzes the dehydration of norsolorinic acid to form (1'S)-averantin. The cytochrome P450 monooxygenase avnA then catalyzes the hydroxylation of AVN to 5'hydroxyaverantin (HAVN). The next step is performed by adhA that transforms HAVN to averufin (AVF). Averufin might then be converted to hydroxyversicolorone by cypX and avfA. Hydroxyversicolorone is further converted versiconal hemiacetal acetate (VHA) by moxY. VHA is then the substrate for the versiconal hemiacetal acetate esterase est1 to yield versiconal (VAL). Versicolorin B synthase vbsA then converts VAL to versicolorin B (VERB) by closing the bisfuran ring. Then, the activity of the versicolorin B desaturase verB leads to versicolorin A (VERA). DotB, a predicted chloroperoxidase, may perform epoxidation of the A-ring of VERA. Alternatively, a cytochrome P450, such as cypX or avnA could catalyze this step. It is also possible that another, uncharacterized, cytochrome P450 enzyme is responsible for this step. Opening of the epoxide could potentially be achieved by the epoxide hydrolase epoA. However, epoA seems not to be required for DOTH biosynthesis, but other epoxide hydrolases may have the ability to complement this hydrolysis. Alternatively, opening of the epoxide ring could be achieved non-enzymatically. The next step is the deoxygenation of ring A to yield the 5,8-dihydroxyanthraquinone which is most likely catalyzed by the NADPH dehydrogenase encoded by ver1. The last stages of DOTH biosynthesis are proposed to involve hydroxylation of the bisfuran. OrdB and norB might have oxidative roles here. An alternative possibility is that cytochrome P450 monoogenases such as avnA and cypX might perform these steps in addition to previously proposed steps. In Dothistroma septosporum (strain NZE10 / CBS 128990) (Red band needle blight fungus), this protein is Norsolorinic acid reductase B.